A 74-amino-acid polypeptide reads, in one-letter code: MIDIKAWAEYVVEWAAKDPYGFLTTVILALTPLFIASALLSWKLAKMIEAKDREQKKKQKRQENIAKAKRAKKD.

The helical transmembrane segment at 20 to 40 (YGFLTTVILALTPLFIASALL) threads the bilayer. The stretch at 42 to 74 (WKLAKMIEAKDREQKKKQKRQENIAKAKRAKKD) forms a coiled coil. The span at 53 to 66 (REQKKKQKRQENIA) shows a compositional bias: basic and acidic residues. The segment at 53 to 74 (REQKKKQKRQENIAKAKRAKKD) is disordered.

It belongs to the SMIM15 family.

The protein localises to the membrane. This chain is Small integral membrane protein 15 (smim15), found in Danio rerio (Zebrafish).